The primary structure comprises 156 residues: Small ribosomal subunit protein uS7 (156 aa).

It belongs to the universal ribosomal protein uS7 family. In terms of assembly, part of the 30S ribosomal subunit. Contacts proteins S9 and S11.

Functionally, one of the primary rRNA binding proteins, it binds directly to 16S rRNA where it nucleates assembly of the head domain of the 30S subunit. Is located at the subunit interface close to the decoding center, probably blocks exit of the E-site tRNA. The chain is Small ribosomal subunit protein uS7 from Treponema pallidum (strain Nichols).